Reading from the N-terminus, the 410-residue chain is Polyprenol-phosphate-mannose-dependent alpha-(1-2)-phosphatidylinositol pentamannoside mannosyltransferase (410 aa).

A run of 10 helical transmembrane segments spans residues 31–51 (LAPM…YLVP), 96–116 (FAAI…AFIW), 160–180 (TFDY…AVST), 188–208 (LLVG…LYFL), 214–234 (AAVA…WLVV), 276–296 (GFGP…LLAW), 306–326 (LGGI…SWTH), 328–348 (WVWL…ALRG), 351–371 (ILGW…LSFA), and 384–404 (LAWA…WIAF).

Belongs to the glycosyltransferase 87 family.

The protein resides in the cell membrane. Its pathway is phospholipid metabolism; phosphatidylinositol metabolism. Catalyzes the alpha-1,2 addition of a mannose residue from polyprenol-phosphate-mannose (PPM) to a monoacyl phosphatidylinositol tetramannoside (AcPIM4) to generate a monoacyl phosphatidylinositol pentamannoside (AcPIM5). The polypeptide is Polyprenol-phosphate-mannose-dependent alpha-(1-2)-phosphatidylinositol pentamannoside mannosyltransferase (Mycolicibacterium smegmatis (strain ATCC 700084 / mc(2)155) (Mycobacterium smegmatis)).